The following is an 86-amino-acid chain: ATP synthase subunit c (86 aa).

2 helical membrane passes run 8-28 and 64-84; these read VLGC…GPGI and TTGL…PLLG.

The protein belongs to the ATPase C chain family. F-type ATPases have 2 components, F(1) - the catalytic core - and F(0) - the membrane proton channel. F(1) has five subunits: alpha(3), beta(3), gamma(1), delta(1), epsilon(1). F(0) has three main subunits: a(1), b(2) and c(10-14). The alpha and beta chains form an alternating ring which encloses part of the gamma chain. F(1) is attached to F(0) by a central stalk formed by the gamma and epsilon chains, while a peripheral stalk is formed by the delta and b chains.

Its subcellular location is the cell membrane. In terms of biological role, f(1)F(0) ATP synthase produces ATP from ADP in the presence of a proton or sodium gradient. F-type ATPases consist of two structural domains, F(1) containing the extramembraneous catalytic core and F(0) containing the membrane proton channel, linked together by a central stalk and a peripheral stalk. During catalysis, ATP synthesis in the catalytic domain of F(1) is coupled via a rotary mechanism of the central stalk subunits to proton translocation. Key component of the F(0) channel; it plays a direct role in translocation across the membrane. A homomeric c-ring of between 10-14 subunits forms the central stalk rotor element with the F(1) delta and epsilon subunits. The protein is ATP synthase subunit c of Lachnoclostridium phytofermentans (strain ATCC 700394 / DSM 18823 / ISDg) (Clostridium phytofermentans).